The chain runs to 443 residues: MRELVHMQAGQCGNQIGSKFWETISQEHGIDEMGSYHGDSDLQLERINVYYNEGQGGKYVPRALLIDLEPGTMDSVRSGPLGKLFRPDNFIFGQSGAGNNWAKGHYTEGAELIEEVLDVVRKECEACDCLQGFQLCHSLGGGTGSGMGTLLIAKIREEYPDRIMTSFSVVPSPKVSDTVVEPYNATLSVHQLVESTDETFCIDNEALYDICFRTLKLPNPNYSDLNHLVSLTMSGVTTSLRFPGQLNSDLRKLAVNMVPFPRLHFFVPGFAPLASRTSQSYQSCTILELTRQMFDAKNMMAACDPSHGRYLTVAAMYRGRVSMKEVEDRILETQTRNSTYFVEWIPNNVKTAVCDIPPIDFKVAGTFIGNTTAIQELFTRVSDQFSAMFRRRAFLHFFTSEGMDEMEFSEAESNMNDLISEYQQYQEVGIDDDYGEEEAAPEE.

Residues Q11, E69, S138, G142, T143, G144, N204, and N226 each contribute to the GTP site. Residue E69 participates in Mg(2+) binding.

It belongs to the tubulin family. Dimer of alpha and beta chains. A typical microtubule is a hollow water-filled tube with an outer diameter of 25 nm and an inner diameter of 15 nM. Alpha-beta heterodimers associate head-to-tail to form protofilaments running lengthwise along the microtubule wall with the beta-tubulin subunit facing the microtubule plus end conferring a structural polarity. Microtubules usually have 13 protofilaments but different protofilament numbers can be found in some organisms and specialized cells. The cofactor is Mg(2+).

Its subcellular location is the cytoplasm. The protein resides in the cytoskeleton. Its function is as follows. Tubulin is the major constituent of microtubules, a cylinder consisting of laterally associated linear protofilaments composed of alpha- and beta-tubulin heterodimers. Microtubules grow by the addition of GTP-tubulin dimers to the microtubule end, where a stabilizing cap forms. Below the cap, tubulin dimers are in GDP-bound state, owing to GTPase activity of alpha-tubulin. The polypeptide is Tubulin beta-3 chain (TUB-3) (Echinococcus multilocularis (Fox tapeworm)).